Here is a 142-residue protein sequence, read N- to C-terminus: MAKKVDGYIKLQVAAGAANPSPPVGPALGQKGVNIMEFCKAFNARTEKFEKGMPIPVVITVYTDRSFTFETKTPPASFLLLKAAGLKSGSGRPNTEKVGTIKRSAVQEIAETKAADMTGADIEAMTRSIEGTARSMGLVVED.

Belongs to the universal ribosomal protein uL11 family. As to quaternary structure, part of the ribosomal stalk of the 50S ribosomal subunit. Interacts with L10 and the large rRNA to form the base of the stalk. L10 forms an elongated spine to which L12 dimers bind in a sequential fashion forming a multimeric L10(L12)X complex. One or more lysine residues are methylated.

Its function is as follows. Forms part of the ribosomal stalk which helps the ribosome interact with GTP-bound translation factors. This chain is Large ribosomal subunit protein uL11, found in Shewanella loihica (strain ATCC BAA-1088 / PV-4).